The primary structure comprises 281 residues: DegV domain-containing protein CPE2509 (281 aa).

Residues 4–279 (IAIITDSSCD…PGMVGVSIQK (276 aa)) enclose the DegV domain. Residues T60 and S93 each contribute to the hexadecanoate site.

May bind long-chain fatty acids, such as palmitate, and may play a role in lipid transport or fatty acid metabolism. The polypeptide is DegV domain-containing protein CPE2509 (Clostridium perfringens (strain 13 / Type A)).